The primary structure comprises 270 residues: Phosphatidylglycerol--prolipoprotein diacylglyceryl transferase (270 aa).

4 helical membrane passes run 19-39 (FPVY…LWLA), 56-76 (LVLI…VIFE), 92-112 (QGGL…ILFA), and 116-136 (GVSF…GQAI). Arg138 serves as a coordination point for a 1,2-diacyl-sn-glycero-3-phospho-(1'-sn-glycerol). The next 3 membrane-spanning stretches (helical) occupy residues 178 to 198 (HPTF…LLAL), 206 to 226 (GELF…VEGL), and 236 to 256 (LRIA…FIIV).

It belongs to the Lgt family.

The protein resides in the cell membrane. It carries out the reaction L-cysteinyl-[prolipoprotein] + a 1,2-diacyl-sn-glycero-3-phospho-(1'-sn-glycerol) = an S-1,2-diacyl-sn-glyceryl-L-cysteinyl-[prolipoprotein] + sn-glycerol 1-phosphate + H(+). Its pathway is protein modification; lipoprotein biosynthesis (diacylglyceryl transfer). Its function is as follows. Catalyzes the transfer of the diacylglyceryl group from phosphatidylglycerol to the sulfhydryl group of the N-terminal cysteine of a prolipoprotein, the first step in the formation of mature lipoproteins. The sequence is that of Phosphatidylglycerol--prolipoprotein diacylglyceryl transferase from Bacillus cereus (strain G9842).